The chain runs to 874 residues: Probable inorganic carbon transporter subunit DabA (874 aa).

Residues Cys398, Asp400, His580, and Cys595 each contribute to the Zn(2+) site.

This sequence belongs to the inorganic carbon transporter (TC 9.A.2) DabA family. In terms of assembly, forms a complex with DabB. Zn(2+) is required as a cofactor.

Its subcellular location is the cell membrane. Functionally, part of an energy-coupled inorganic carbon pump. This Bacillus cereus (strain AH187) protein is Probable inorganic carbon transporter subunit DabA.